Reading from the N-terminus, the 539-residue chain is Tyrosine-protein kinase csk-1 (539 aa).

In terms of domain architecture, SH3 spans 43–110 (SPGNDVIVTR…HADCVVRING (68 aa)). The tract at residues 129–148 (PGAASTTSSTSSHHSTAANH) is disordered. Over residues 131 to 146 (AASTTSSTSSHHSTAA) the composition is skewed to low complexity. Positions 151–241 (WFHSMISREN…GLCHRLVTPI (91 aa)) constitute an SH2 domain. A Protein kinase domain is found at 283–535 (IDVGDTIGHG…GQVLQRLTTI (253 aa)). Residues 289-297 (IGHGEFGDV) and Lys310 each bind ATP. Asp403 serves as the catalytic Proton acceptor.

This sequence belongs to the protein kinase superfamily. Tyr protein kinase family. CSK subfamily. Mg(2+) serves as cofactor. The cofactor is Mn(2+). In terms of tissue distribution, expressed predominantly in pharyngeal muscles in procorpus, metacorpus and terminal bulb. Expressed also in some neurons (ASE, ADF, AVA, AUA, RMDV and BAG) in the head region, anchor cell, vulva, cells around anus, body wall muscle and gondal distal tip cells.

It carries out the reaction L-tyrosyl-[protein] + ATP = O-phospho-L-tyrosyl-[protein] + ADP + H(+). Its function is as follows. Non-receptor tyrosine-protein kinase which plays a role in pharynx function by regulating pumping and the orientation of pharyngeal muscle fibers, independently of src-1 and src-2. May phosphorylate and thereby negatively regulate src-1 and src-2 activities. This Caenorhabditis elegans protein is Tyrosine-protein kinase csk-1.